Reading from the N-terminus, the 329-residue chain is Glycosyltransferase family protein 64 C3 (329 aa).

The signal sequence occupies residues Met-1–Gly-27. Asn-99 is a glycosylation site (N-linked (GlcNAc...) asparagine). Residues Ser-118–Arg-123, Asp-139–Asp-141, Arg-169, Arg-226–Asp-230, and Val-271–Arg-284 contribute to the substrate site. A Mn(2+)-binding site is contributed by Asp-141. Cys-228 and Cys-287 are disulfide-bonded. The active site involves Asp-230. The interval Val-268–Arg-284 is substrate binding.

Belongs to the glycosyltransferase 64 family. Mn(2+) is required as a cofactor.

It participates in protein modification; protein glycosylation. Probable glycosyltransferase. This chain is Glycosyltransferase family protein 64 C3, found in Arabidopsis thaliana (Mouse-ear cress).